A 327-amino-acid chain; its full sequence is MVREKVKVSTRTLQWKCVESRRDSKRLYYGRFILSPLMKGQADTIGIAMRRALLGEIEGTCITRAKSENIPHDYSNIVGIQESVHEILMNLNEIVLRSNLYGTRNALICVQGPGYITARDIILPPSVEIIDNTQHIATLTEPIDLCIGLKIERNRGYSLKMSNNFEDRSYPIDAVFMPVQNANHSIHSYGNGNEKQEILFLEIWTNGSLTPKEALHEASRNLINLFIPFLHVEEETFYLENNQHQVTLPLFPFHNRLVNLRKKKKEQGFQYIFIDQLELPPRIYNCLKKSNIHTLLDLLNNSQEDLIKIEHFHIEDVKKILDILEKK.

Residues 1 to 233 form an alpha N-terminal domain (alpha-NTD) region; the sequence is MVREKVKVST…NLFIPFLHVE (233 aa). The interval 266 to 327 is alpha C-terminal domain (alpha-CTD); that stretch reads EQGFQYIFID…KKILDILEKK (62 aa).

Belongs to the RNA polymerase alpha chain family. As to quaternary structure, in plastids the minimal PEP RNA polymerase catalytic core is composed of four subunits: alpha, beta, beta', and beta''. When a (nuclear-encoded) sigma factor is associated with the core the holoenzyme is formed, which can initiate transcription.

The protein resides in the plastid. The protein localises to the chloroplast. The enzyme catalyses RNA(n) + a ribonucleoside 5'-triphosphate = RNA(n+1) + diphosphate. Functionally, DNA-dependent RNA polymerase catalyzes the transcription of DNA into RNA using the four ribonucleoside triphosphates as substrates. This chain is DNA-directed RNA polymerase subunit alpha, found in Barbarea verna (Land cress).